Consider the following 77-residue polypeptide: Sec-independent protein translocase protein TatA (77 aa).

The helical transmembrane segment at 1 to 21 (MGSFSIWHWLVVLAIVVLVFG) threads the bilayer. A disordered region spans residues 40–77 (KEGMKGAEEENTQPPPSHQQVTGHSIKSEIEEKDQTKV). Over residues 65-77 (IKSEIEEKDQTKV) the composition is skewed to basic and acidic residues.

Belongs to the TatA/E family. In terms of assembly, the Tat system comprises two distinct complexes: a TatABC complex, containing multiple copies of TatA, TatB and TatC subunits, and a separate TatA complex, containing only TatA subunits. Substrates initially bind to the TatABC complex, which probably triggers association of the separate TatA complex to form the active translocon.

The protein resides in the cell inner membrane. Its function is as follows. Part of the twin-arginine translocation (Tat) system that transports large folded proteins containing a characteristic twin-arginine motif in their signal peptide across membranes. TatA could form the protein-conducting channel of the Tat system. The sequence is that of Sec-independent protein translocase protein TatA from Nitrosomonas eutropha (strain DSM 101675 / C91 / Nm57).